The primary structure comprises 201 residues: MDLISVILISIGLSMDAFAVSITNGAMISKVTASEGIRIGLFFGGFQALMPLIGWSIGIKFESYIAALDHWIALILLSIIGGKMIYDSVKENQDHKDEIACDYAAGEKKCLNNKTLILLAIATSIDALAVGVSFAFLKVSIINTIIIIGSITFVICFIGVMIGKKCGKLLKKRAEILGGVVLILIGVKIFIQHTNILSYIF.

6 consecutive transmembrane segments (helical) span residues 3-23, 39-59, 65-85, 116-136, 141-161, and 176-196; these read LISVILISIGLSMDAFAVSIT, IGLFFGGFQALMPLIGWSIGI, IAALDHWIALILLSIIGGKMI, LILLAIATSIDALAVGVSFAF, IINTIIIIGSITFVICFIGVM, and ILGGVVLILIGVKIFIQHTNI.

It belongs to the MntP (TC 9.B.29) family.

The protein resides in the cell membrane. In terms of biological role, probably functions as a manganese efflux pump. In Clostridium botulinum (strain Hall / ATCC 3502 / NCTC 13319 / Type A), this protein is Putative manganese efflux pump MntP 2.